We begin with the raw amino-acid sequence, 322 residues long: tRNA pseudouridine synthase B (322 aa).

Residues 1–11 (MRPPRTTELDR) show a composition bias toward basic and acidic residues. The segment at 1–22 (MRPPRTTELDRPMTTAASQRPR) is disordered. Residue aspartate 65 is the Nucleophile of the active site.

It belongs to the pseudouridine synthase TruB family. Type 1 subfamily.

The enzyme catalyses uridine(55) in tRNA = pseudouridine(55) in tRNA. Functionally, responsible for synthesis of pseudouridine from uracil-55 in the psi GC loop of transfer RNAs. This Burkholderia lata (strain ATCC 17760 / DSM 23089 / LMG 22485 / NCIMB 9086 / R18194 / 383) protein is tRNA pseudouridine synthase B.